Here is a 540-residue protein sequence, read N- to C-terminus: Chaperonin GroEL (540 aa).

Residues 30 to 33 (TLGP), Lys-51, 87 to 91 (DGTTT), Gly-415, and Asp-496 contribute to the ATP site.

This sequence belongs to the chaperonin (HSP60) family. Forms a cylinder of 14 subunits composed of two heptameric rings stacked back-to-back. Interacts with the co-chaperonin GroES.

The protein localises to the cytoplasm. It catalyses the reaction ATP + H2O + a folded polypeptide = ADP + phosphate + an unfolded polypeptide.. In terms of biological role, together with its co-chaperonin GroES, plays an essential role in assisting protein folding. The GroEL-GroES system forms a nano-cage that allows encapsulation of the non-native substrate proteins and provides a physical environment optimized to promote and accelerate protein folding. This is Chaperonin GroEL from Thermodesulfovibrio yellowstonii (strain ATCC 51303 / DSM 11347 / YP87).